The primary structure comprises 608 residues: Coilin (608 aa).

A disordered region spans residues 134–272 (KETGGYESES…RKKAKRQWLR (139 aa)). Residues 141–155 (SESEEDELEEEAEEF) show a composition bias toward acidic residues. The span at 161–179 (ASKKRKTSSKNQSTKRKKC) shows a compositional bias: basic residues. The short motif at 163–170 (KKRKTSSK) is the Nuclear localization signal 1 element. S187 carries the phosphoserine modification. Positions 211 to 228 (DVQSANNDEQNNDSTKPM) are enriched in polar residues. Basic and acidic residues predominate over residues 235–245 (SQQEESKEHND). Residues 253–260 (TKKTPSRS) carry the Nuclear localization signal 2 motif. Positions 256-269 (TPSRSARRKKAKRQ) are enriched in basic residues. Residues 410–510 (YEQLVAYTGS…LLDVRSVKTS (101 aa)) form the Tudor; atypical domain. Positions 513 to 585 (DSAEVAKSAL…KKGSSSGGSW (73 aa)) are disordered. Low complexity predominate over residues 558-585 (EALSAKKAALSQANNGWNKKGSSSGGSW).

Belongs to the coilin family. Homooligomer. Interaction with RNA results in multimerization due to structural alteration in the NOD domain.

It is found in the nucleus. Its subcellular location is the cajal body. Functionally, probable component of nuclear coiled bodies, also known as Cajal bodies or CBs, which are involved in the modification and assembly of nucleoplasmic snRNPs. Required for CBs formation. Binds snRNAs and non-specific artificial RNA via the N-terminal part of the NOD domain and via the NLS2 region (212-282) of the IDD domain. The two sites are able to function independently and provide effective RNA-binding in a non-cooperative manner. In Arabidopsis thaliana (Mouse-ear cress), this protein is Coilin.